We begin with the raw amino-acid sequence, 212 residues long: Ribosomal RNA large subunit methyltransferase E (212 aa).

5 residues coordinate S-adenosyl-L-methionine: G57, W59, D77, D93, and D122. K162 (proton acceptor) is an active-site residue.

The protein belongs to the class I-like SAM-binding methyltransferase superfamily. RNA methyltransferase RlmE family.

The protein resides in the cytoplasm. The catalysed reaction is uridine(2552) in 23S rRNA + S-adenosyl-L-methionine = 2'-O-methyluridine(2552) in 23S rRNA + S-adenosyl-L-homocysteine + H(+). In terms of biological role, specifically methylates the uridine in position 2552 of 23S rRNA at the 2'-O position of the ribose in the fully assembled 50S ribosomal subunit. The sequence is that of Ribosomal RNA large subunit methyltransferase E from Coxiella burnetii (strain CbuK_Q154) (Coxiella burnetii (strain Q154)).